Consider the following 541-residue polypeptide: Centrosomal protein of 63 kDa (541 aa).

N-acetylmethionine is present on methionine 1. Coiled-coil stretches lie at residues 22–199 (EAEL…ESVE) and 242–305 (MTVL…TQHA). Residue serine 278 is modified to Phosphoserine. The tract at residues 294 to 324 (QEKVKATDTQHAVEAIRPREESPAEKKYTSQ) is disordered. Residues 307 to 321 (EAIRPREESPAEKKY) show a composition bias toward basic and acidic residues. 2 coiled-coil regions span residues 346–485 (LQAE…KLEL) and 514–541 (HILE…TALK).

Belongs to the CEP63 family. Interacts with CEP152 and CDK1; these interactions recruit both ligands to centrosomes. Interacts with CDK2, CDK5RAP2, WDR62, CEP90, KIAA0753/moonraker and CCDC14. CEP63, CDK5RAP2, CEP152, WDR62 are proposed to form a stepwise assembled complex at the centrosome forming a ring near parental centrioles. Interacts with CCDC57; the interaction is required for their location to proximal end of centrioles. Interacts with FXR1; promoting its stabilization. In terms of processing, polyubiquitinated via 'Lys-48'-linked ubiquitin, leading to its degradation. Deubiquitinated by USP36, promoting its stabilization.

Its subcellular location is the cytoplasm. It localises to the cytoskeleton. The protein localises to the microtubule organizing center. The protein resides in the centrosome. It is found in the centriole. Its subcellular location is the centriolar satellite. Functionally, required for normal spindle assembly. Plays a key role in mother-centriole-dependent centriole duplication; the function seems also to involve CEP152, CDK5RAP2 and WDR62 through a stepwise assembled complex at the centrosome that recruits CDK2 required for centriole duplication. Reported to be required for centrosomal recruitment of CEP152; however, this function has been questioned. Also recruits CDK1 to centrosomes. Plays a role in DNA damage response. Following DNA damage, such as double-strand breaks (DSBs), is removed from centrosomes; this leads to the inactivation of spindle assembly and delay in mitotic progression. Promotes stabilization of FXR1 protein by inhibiting FXR1 ubiquitination. The polypeptide is Centrosomal protein of 63 kDa (CEP63) (Pongo abelii (Sumatran orangutan)).